A 90-amino-acid chain; its full sequence is Probable Fe(2+)-trafficking protein (90 aa).

It belongs to the Fe(2+)-trafficking protein family.

In terms of biological role, could be a mediator in iron transactions between iron acquisition and iron-requiring processes, such as synthesis and/or repair of Fe-S clusters in biosynthetic enzymes. The polypeptide is Probable Fe(2+)-trafficking protein (Vibrio parahaemolyticus serotype O3:K6 (strain RIMD 2210633)).